A 196-amino-acid chain; its full sequence is Peptidyl-tRNA hydrolase (196 aa).

Tyrosine 21 is a binding site for tRNA. The active-site Proton acceptor is the histidine 26. TRNA is bound by residues phenylalanine 72, asparagine 74, and asparagine 120.

This sequence belongs to the PTH family. Monomer.

Its subcellular location is the cytoplasm. It carries out the reaction an N-acyl-L-alpha-aminoacyl-tRNA + H2O = an N-acyl-L-amino acid + a tRNA + H(+). Its function is as follows. Hydrolyzes ribosome-free peptidyl-tRNAs (with 1 or more amino acids incorporated), which drop off the ribosome during protein synthesis, or as a result of ribosome stalling. Catalyzes the release of premature peptidyl moieties from peptidyl-tRNA molecules trapped in stalled 50S ribosomal subunits, and thus maintains levels of free tRNAs and 50S ribosomes. This chain is Peptidyl-tRNA hydrolase, found in Mycobacteroides abscessus (strain ATCC 19977 / DSM 44196 / CCUG 20993 / CIP 104536 / JCM 13569 / NCTC 13031 / TMC 1543 / L948) (Mycobacterium abscessus).